A 474-amino-acid polypeptide reads, in one-letter code: Dihydrolipoyl dehydrogenase (474 aa).

FAD contacts are provided by residues 36-45 (ERYNTLGGVC), lysine 54, and glycine 117. Cysteine 45 and cysteine 50 are disulfide-bonded. NAD(+) contacts are provided by residues 182–186 (GGGII) and glutamate 205. Residue lysine 220 is modified to N6-acetyllysine. Residues valine 238 and 270–273 (AIGR) contribute to the NAD(+) site. FAD-binding residues include aspartate 313 and alanine 321. Histidine 445 acts as the Proton acceptor in catalysis.

The protein belongs to the class-I pyridine nucleotide-disulfide oxidoreductase family. In terms of assembly, homodimer. Requires FAD as cofactor.

Its subcellular location is the cytoplasm. The catalysed reaction is N(6)-[(R)-dihydrolipoyl]-L-lysyl-[protein] + NAD(+) = N(6)-[(R)-lipoyl]-L-lysyl-[protein] + NADH + H(+). In terms of biological role, lipoamide dehydrogenase is a component of the glycine cleavage system as well as of the alpha-ketoacid dehydrogenase complexes. The polypeptide is Dihydrolipoyl dehydrogenase (lpdA) (Shigella flexneri).